Here is an 832-residue protein sequence, read N- to C-terminus: Protein P (832 aa).

A terminal protein domain (TP) region spans residues 1–177 (MPLSYQHFRR…FCGSPYSWEQ (177 aa)). The tract at residues 178 to 335 (KLQHGAESFH…YCLSHIVNLL (158 aa)) is spacer. Disordered regions lie at residues 186-229 (FHQQ…QGRS) and 275-305 (YPTVSTSKRRSSSGHAVDFHNLPPSSARSQS). Residues 336–679 (EDWGPCTEHG…YMNLYPVARQ (344 aa)) are polymerase/reverse transcriptase domain (RT). In terms of domain architecture, Reverse transcriptase spans 346–589 (EHHIRIPRTP…YSLHFMGYVI (244 aa)). Residues Asp418, Asp540, and Asp541 each contribute to the Mg(2+) site.

Belongs to the hepadnaviridae P protein family.

It carries out the reaction DNA(n) + a 2'-deoxyribonucleoside 5'-triphosphate = DNA(n+1) + diphosphate. The enzyme catalyses Endonucleolytic cleavage to 5'-phosphomonoester.. Activated by host HSP70 and HSP40 in vitro to be able to bind the epsilon loop of the pgRNA. Because deletion of the RNase H region renders the protein partly chaperone-independent, the chaperones may be needed indirectly to relieve occlusion of the RNA-binding site by this domain. Inhibited by several reverse-transcriptase inhibitors: Lamivudine, Adefovir and Entecavir. In terms of biological role, multifunctional enzyme that converts the viral RNA genome into dsDNA in viral cytoplasmic capsids. This enzyme displays a DNA polymerase activity that can copy either DNA or RNA templates, and a ribonuclease H (RNase H) activity that cleaves the RNA strand of RNA-DNA heteroduplexes in a partially processive 3'- to 5'-endonucleasic mode. Neo-synthesized pregenomic RNA (pgRNA) are encapsidated together with the P protein, and reverse-transcribed inside the nucleocapsid. Initiation of reverse-transcription occurs first by binding the epsilon loop on the pgRNA genome, and is initiated by protein priming, thereby the 5'-end of (-)DNA is covalently linked to P protein. Partial (+)DNA is synthesized from the (-)DNA template and generates the relaxed circular DNA (RC-DNA) genome. After budding and infection, the RC-DNA migrates in the nucleus, and is converted into a plasmid-like covalently closed circular DNA (cccDNA). The activity of P protein does not seem to be necessary for cccDNA generation, and is presumably released from (+)DNA by host nuclear DNA repair machinery. The polypeptide is Protein P (Homo sapiens (Human)).